A 257-amino-acid polypeptide reads, in one-letter code: Diacetyl reductase [(S)-acetoin forming] (257 aa).

6–30 contributes to the NAD(+) binding site; sequence IITGAAGGLGKGIAERLANDGFNIV. Ser139 is a binding site for substrate. Catalysis depends on Tyr152, which acts as the Proton acceptor. Residue Lys156 is part of the active site.

Belongs to the short-chain dehydrogenases/reductases (SDR) family.

It carries out the reaction (S)-acetoin + NAD(+) = diacetyl + NADH + H(+). Its function is as follows. Catalyzes the irreversible reduction of 2,3-butanediol to (S)-acetoin in the presence of NADH. The polypeptide is Diacetyl reductase [(S)-acetoin forming] (butA) (Staphylococcus epidermidis (strain ATCC 12228 / FDA PCI 1200)).